The chain runs to 637 residues: Glutamate--cysteine ligase catalytic subunit (637 aa).

M1 bears the N-acetylmethionine mark. Phosphoserine occurs at positions 5 and 8.

It belongs to the glutamate--cysteine ligase type 3 family. Heterodimer of a catalytic heavy chain and a regulatory light chain.

It catalyses the reaction L-cysteine + L-glutamate + ATP = gamma-L-glutamyl-L-cysteine + ADP + phosphate + H(+). The catalysed reaction is (2S)-2-aminobutanoate + L-glutamate + ATP = gamma-L-glutamyl-(2S)-2-aminobutanoate + ADP + phosphate + H(+). Its pathway is sulfur metabolism; glutathione biosynthesis; glutathione from L-cysteine and L-glutamate: step 1/2. With respect to regulation, feedback inhibition by glutathione. Catalyzes the ATP-dependent ligation of L-glutamate and L-cysteine and participates in the first and rate-limiting step in glutathione biosynthesis. The sequence is that of Glutamate--cysteine ligase catalytic subunit from Homo sapiens (Human).